The sequence spans 233 residues: Delta-actitoxin-Amc1a (233 aa).

Positions 1-18 are cleaved as a signal peptide; sequence MKRIFIVALLFATCLVNA. 2 consecutive propeptides follow at residues 19-29 and 30-33; these read KPSINDADIKR and EPEP. A Hydroxyproline modification is found at P39. Intrachain disulfides connect C40/C51 and C43/C58. 2 propeptides span residues 61 to 63 and 64 to 67; these read RKR and EPEP. The residue at position 73 (P73) is a Hydroxyproline. 2 disulfides stabilise this stretch: C74-C85 and C77-C92. Propeptides lie at residues 95–97 and 98–101; these read RKR and EPEP. Position 107 is a hydroxyproline (P107). 2 cysteine pairs are disulfide-bonded: C108/C119 and C111/C126. 2 propeptides span residues 129-131 and 132-135; these read RKR and EPEP. The residue at position 141 (P141) is a Hydroxyproline. 2 disulfide bridges follow: C142–C153 and C145–C160. 2 propeptides span residues 163 to 165 and 166 to 169; these read RKR and EPEP. Hydroxyproline is present on P175. 2 disulfide bridges follow: C176-C187 and C179-C194. 2 propeptides span residues 197 to 199 and 200 to 203; these read RKR and EPEP. The residue at position 209 (P209) is a Hydroxyproline. Intrachain disulfides connect C210-C221 and C213-C228. Positions 231–233 are excised as a propeptide; sequence RKR.

This sequence belongs to the sea anemone BBH family. In terms of processing, each Am I peptide may contain 2 disulfide bonds. The precursor protein seems to be processed in the following sequence: release of the signal peptide and of the propeptide, production of six identical 34-residue peptides by cleavage between Arg and Glu, release of four N-terminal and three C-terminal residues from each peptide and hydroxylation of each Pro in position 6 of the resulting 27-residue peptides.

Its subcellular location is the secreted. It is found in the nematocyst. In terms of biological role, may inhibit voltage-gated sodium channels (Nav). In Antheopsis maculata (Sea anemone), this protein is Delta-actitoxin-Amc1a.